A 219-amino-acid polypeptide reads, in one-letter code: Octanoyltransferase (219 aa).

The BPL/LPL catalytic domain occupies 24-212 (KFRRECILFL…NLNSFLGPIS (189 aa)). Substrate contacts are provided by residues 69-76 (RGGDFTAH), 140-142 (SIG), and 153-155 (GVA). C171 acts as the Acyl-thioester intermediate in catalysis.

The protein belongs to the LipB family.

The protein resides in the cytoplasm. The enzyme catalyses octanoyl-[ACP] + L-lysyl-[protein] = N(6)-octanoyl-L-lysyl-[protein] + holo-[ACP] + H(+). It functions in the pathway protein modification; protein lipoylation via endogenous pathway; protein N(6)-(lipoyl)lysine from octanoyl-[acyl-carrier-protein]: step 1/2. Its function is as follows. Catalyzes the transfer of endogenously produced octanoic acid from octanoyl-acyl-carrier-protein onto the lipoyl domains of lipoate-dependent enzymes. Lipoyl-ACP can also act as a substrate although octanoyl-ACP is likely to be the physiological substrate. This chain is Octanoyltransferase, found in Leptospira borgpetersenii serovar Hardjo-bovis (strain JB197).